A 318-amino-acid polypeptide reads, in one-letter code: Melanoma-associated antigen 8 (318 aa).

The disordered stretch occupies residues 1-103 (MLLGQKSQRY…GPSTSPDPAH (103 aa)). In terms of domain architecture, MAGE spans 112–311 (LDEKVAELVR…ISYPSLHEEA (200 aa)).

Expressed in many tumors of several types, such as melanoma, head and neck squamous cell carcinoma, lung carcinoma and breast carcinoma, but not in normal tissues except for testis and placenta.

Not known, though may play a role in embryonal development and tumor transformation or aspects of tumor progression. The polypeptide is Melanoma-associated antigen 8 (MAGEA8) (Homo sapiens (Human)).